A 132-amino-acid polypeptide reads, in one-letter code: DNA-entry nuclease inhibitor (132 aa).

In terms of assembly, this protein is a subunit of a 75 kDa protein complex, which governs binding and entry of donor DNA. The complex is a tetramer of two subunits of the DNA-entry nuclease and two subunits of a competence-specific protein. Only the complex is able to bind ds- and ss-DNA.

It localises to the cell membrane. Functionally, plays a role in the competence of cells to be transformed. It inhibits the activity of the DNA-entry nuclease. The chain is DNA-entry nuclease inhibitor (nin) from Bacillus subtilis (strain 168).